A 161-amino-acid chain; its full sequence is uncharacterized protein (161 aa).

Residues 76–94 (ISISSQCIFNVVILSFVFT) traverse the membrane as a helical segment.

The protein resides in the membrane. This is an uncharacterized protein from Saccharomyces cerevisiae (strain ATCC 204508 / S288c) (Baker's yeast).